The sequence spans 315 residues: Ornithine carbamoyltransferase (315 aa).

Carbamoyl phosphate is bound by residues 57-60, Gln-84, Arg-108, and 135-138; these read STRT and HPCQ. Residues Asn-166, Asp-230, and 234 to 235 contribute to the L-ornithine site; that span reads SM. Carbamoyl phosphate is bound by residues 270–271 and Arg-298; that span reads CL.

This sequence belongs to the aspartate/ornithine carbamoyltransferase superfamily. OTCase family.

It is found in the cytoplasm. It carries out the reaction carbamoyl phosphate + L-ornithine = L-citrulline + phosphate + H(+). It functions in the pathway amino-acid biosynthesis; L-arginine biosynthesis; L-arginine from L-ornithine and carbamoyl phosphate: step 1/3. Functionally, reversibly catalyzes the transfer of the carbamoyl group from carbamoyl phosphate (CP) to the N(epsilon) atom of ornithine (ORN) to produce L-citrulline. This Thermococcus kodakarensis (strain ATCC BAA-918 / JCM 12380 / KOD1) (Pyrococcus kodakaraensis (strain KOD1)) protein is Ornithine carbamoyltransferase.